Here is a 279-residue protein sequence, read N- to C-terminus: Large ribosomal subunit protein uL2 (279 aa).

2 disordered regions span residues S32–H58 and G223–G279. 2 stretches are compositionally biased toward basic residues: residues K40–H58 and V269–G279.

Belongs to the universal ribosomal protein uL2 family. In terms of assembly, part of the 50S ribosomal subunit. Forms a bridge to the 30S subunit in the 70S ribosome.

Its function is as follows. One of the primary rRNA binding proteins. Required for association of the 30S and 50S subunits to form the 70S ribosome, for tRNA binding and peptide bond formation. It has been suggested to have peptidyltransferase activity; this is somewhat controversial. Makes several contacts with the 16S rRNA in the 70S ribosome. This chain is Large ribosomal subunit protein uL2, found in Salinispora tropica (strain ATCC BAA-916 / DSM 44818 / JCM 13857 / NBRC 105044 / CNB-440).